The chain runs to 378 residues: Homeobox protein Meis3 (378 aa).

Positions 24 to 57 (FSEAAPSVPRAPGPYTPHRPPQLQAPGLDSDSLK) are disordered. Pro residues predominate over residues 32-43 (PRAPGPYTPHRP). The region spanning 99–182 (GGDVCSSDSF…PIDLVIEDRD (84 aa)) is the MEIS N-terminal domain. Residues 203–265 (NTTWIRDHED…DEDLDLERRR (63 aa)) form a disordered region. The span at 230 to 244 (SQSGDNSSDQGDGLD) shows a compositional bias: low complexity. Residues 265-327 (RNKKRGIFPK…NARRRIVQPM (63 aa)) constitute a DNA-binding region (homeobox; TALE-type).

This sequence belongs to the TALE/MEIS homeobox family. Expressed at high levels in the brain. Significant expression also observed in the heart, spleen and lung. Expressed in pancreatic islets (beta-cells and non-beta-cells).

Its subcellular location is the nucleus. Functionally, transcriptional regulator which directly modulates PDPK1 expression, thus promoting survival of pancreatic beta-cells. Also regulates expression of NDFIP1, BNIP3, and CCNG1. The sequence is that of Homeobox protein Meis3 (Meis3) from Mus musculus (Mouse).